The primary structure comprises 407 residues: MSAPKKVVLAYSGGLDTSIILKWLQTEYGCEVVTFTADLGQGEELEPARKKAELLGIKPENIFIEDIREEFVRDFVFPMFRANAVYEGLYLLGTSIARPLISKRLVEIAEATGADAVSHGATGKGNDQVRFELSAYALNPDIKVIAPWREWDLTSRTKLLEFAEANQIPIAKDKRGEAPFSVDANLLHTSSEGKVLEDPAEMAPDYVYQRTVNPEDAPNEPEFIEITFEKGDAVAINGEAMSPATILTKLNEYGRKHGIGRLDFVENRFVGMKSRGIYEAPGGDILLEAHRGIEQITLDSGAGHLKDSIMPRYAELIYNGFWYSPEREMLQALIDESQKHVTGTVRVKLYKGSAKTVGRWSEHSLYSEAHVTFEEDAGAYDQKDAQGFIQLNALRLKLLAARNRRVK.

Residues 10–18 and Ala37 contribute to the ATP site; that span reads AYSGGLDTS. Tyr90 and Ser95 together coordinate L-citrulline. ATP is bound at residue Gly120. Residues Thr122, Asn126, and Asp127 each contribute to the L-aspartate site. Asn126 serves as a coordination point for L-citrulline. L-citrulline-binding residues include Arg130, Ser181, Ser190, Glu266, and Tyr278.

The protein belongs to the argininosuccinate synthase family. Type 1 subfamily. As to quaternary structure, homotetramer.

The protein resides in the cytoplasm. It carries out the reaction L-citrulline + L-aspartate + ATP = 2-(N(omega)-L-arginino)succinate + AMP + diphosphate + H(+). Its pathway is amino-acid biosynthesis; L-arginine biosynthesis; L-arginine from L-ornithine and carbamoyl phosphate: step 2/3. The polypeptide is Argininosuccinate synthase (Ruegeria sp. (strain TM1040) (Silicibacter sp.)).